Reading from the N-terminus, the 279-residue chain is Energy-coupling factor transporter ATP-binding protein EcfA1 (279 aa).

The ABC transporter domain occupies 6–240 (VRLEHVFYKY…ADAMREIGLG (235 aa)). ATP is bound at residue 40–47 (GHNGSGKS).

It belongs to the ABC transporter superfamily. Energy-coupling factor EcfA family. Forms a stable energy-coupling factor (ECF) transporter complex composed of 2 membrane-embedded substrate-binding proteins (S component), 2 ATP-binding proteins (A component) and 2 transmembrane proteins (T component).

The protein localises to the cell membrane. Functionally, ATP-binding (A) component of a common energy-coupling factor (ECF) ABC-transporter complex. Unlike classic ABC transporters this ECF transporter provides the energy necessary to transport a number of different substrates. This chain is Energy-coupling factor transporter ATP-binding protein EcfA1, found in Listeria monocytogenes serovar 1/2a (strain ATCC BAA-679 / EGD-e).